Here is a 291-residue protein sequence, read N- to C-terminus: Nucleotide-binding protein jk1004 (291 aa).

An ATP-binding site is contributed by 16–23; it reads GMSGAGRR. 67 to 70 serves as a coordination point for GTP; that stretch reads DVRS.

Belongs to the RapZ-like family.

Its function is as follows. Displays ATPase and GTPase activities. This Corynebacterium jeikeium (strain K411) protein is Nucleotide-binding protein jk1004.